Reading from the N-terminus, the 95-residue chain is Co-chaperonin GroES (95 aa).

This sequence belongs to the GroES chaperonin family. Heptamer of 7 subunits arranged in a ring. Interacts with the chaperonin GroEL.

Its subcellular location is the cytoplasm. In terms of biological role, together with the chaperonin GroEL, plays an essential role in assisting protein folding. The GroEL-GroES system forms a nano-cage that allows encapsulation of the non-native substrate proteins and provides a physical environment optimized to promote and accelerate protein folding. GroES binds to the apical surface of the GroEL ring, thereby capping the opening of the GroEL channel. This Clostridium botulinum (strain ATCC 19397 / Type A) protein is Co-chaperonin GroES.